A 394-amino-acid chain; its full sequence is 1-deoxy-D-xylulose 5-phosphate reductoisomerase (394 aa).

NADPH contacts are provided by Thr14, Gly15, Ser16, Ile17, Gly40, Asn43, and Asn130. Position 131 (Lys131) interacts with 1-deoxy-D-xylulose 5-phosphate. Glu132 lines the NADPH pocket. Asp154 is a Mn(2+) binding site. 1-deoxy-D-xylulose 5-phosphate is bound by residues Ser155, Glu156, Ser180, and His203. Glu156 lines the Mn(2+) pocket. Gly209 contacts NADPH. Ser216, Asn221, Lys222, and Glu225 together coordinate 1-deoxy-D-xylulose 5-phosphate. Glu225 lines the Mn(2+) pocket.

Belongs to the DXR family. Mg(2+) serves as cofactor. The cofactor is Mn(2+).

The enzyme catalyses 2-C-methyl-D-erythritol 4-phosphate + NADP(+) = 1-deoxy-D-xylulose 5-phosphate + NADPH + H(+). It functions in the pathway isoprenoid biosynthesis; isopentenyl diphosphate biosynthesis via DXP pathway; isopentenyl diphosphate from 1-deoxy-D-xylulose 5-phosphate: step 1/6. Its function is as follows. Catalyzes the NADPH-dependent rearrangement and reduction of 1-deoxy-D-xylulose-5-phosphate (DXP) to 2-C-methyl-D-erythritol 4-phosphate (MEP). The sequence is that of 1-deoxy-D-xylulose 5-phosphate reductoisomerase from Corynebacterium efficiens (strain DSM 44549 / YS-314 / AJ 12310 / JCM 11189 / NBRC 100395).